A 490-amino-acid chain; its full sequence is UDP-N-acetylmuramoylalanine--D-glutamate ligase (490 aa).

124-130 (GTNGKTT) provides a ligand contact to ATP.

Belongs to the MurCDEF family.

The protein localises to the cytoplasm. It carries out the reaction UDP-N-acetyl-alpha-D-muramoyl-L-alanine + D-glutamate + ATP = UDP-N-acetyl-alpha-D-muramoyl-L-alanyl-D-glutamate + ADP + phosphate + H(+). Its pathway is cell wall biogenesis; peptidoglycan biosynthesis. Its function is as follows. Cell wall formation. Catalyzes the addition of glutamate to the nucleotide precursor UDP-N-acetylmuramoyl-L-alanine (UMA). The chain is UDP-N-acetylmuramoylalanine--D-glutamate ligase (murD) from Mycobacterium leprae (strain TN).